Here is an 847-residue protein sequence, read N- to C-terminus: Leucine--tRNA ligase (847 aa).

The 'HIGH' region signature appears at 41 to 51; the sequence is PYPSGRIHMGH. The short motif at 619–623 is the 'KMSKS' region element; the sequence is KMSKS. Residue K622 coordinates ATP.

The protein belongs to the class-I aminoacyl-tRNA synthetase family.

The protein resides in the cytoplasm. It catalyses the reaction tRNA(Leu) + L-leucine + ATP = L-leucyl-tRNA(Leu) + AMP + diphosphate. This chain is Leucine--tRNA ligase, found in Cereibacter sphaeroides (strain KD131 / KCTC 12085) (Rhodobacter sphaeroides).